A 495-amino-acid chain; its full sequence is Lysine--tRNA ligase (495 aa).

E406 and E413 together coordinate Mg(2+).

The protein belongs to the class-II aminoacyl-tRNA synthetase family. In terms of assembly, homodimer. Mg(2+) is required as a cofactor.

Its subcellular location is the cytoplasm. The enzyme catalyses tRNA(Lys) + L-lysine + ATP = L-lysyl-tRNA(Lys) + AMP + diphosphate. This Leptospira interrogans serogroup Icterohaemorrhagiae serovar Lai (strain 56601) protein is Lysine--tRNA ligase.